A 469-amino-acid chain; its full sequence is 3-isopropylmalate dehydratase large subunit (469 aa).

Cys349, Cys410, and Cys413 together coordinate [4Fe-4S] cluster.

This sequence belongs to the aconitase/IPM isomerase family. LeuC type 1 subfamily. As to quaternary structure, heterodimer of LeuC and LeuD. It depends on [4Fe-4S] cluster as a cofactor.

It catalyses the reaction (2R,3S)-3-isopropylmalate = (2S)-2-isopropylmalate. It participates in amino-acid biosynthesis; L-leucine biosynthesis; L-leucine from 3-methyl-2-oxobutanoate: step 2/4. Functionally, catalyzes the isomerization between 2-isopropylmalate and 3-isopropylmalate, via the formation of 2-isopropylmaleate. This chain is 3-isopropylmalate dehydratase large subunit, found in Neisseria meningitidis serogroup C (strain 053442).